The following is a 342-amino-acid chain: S-adenosylmethionine:tRNA ribosyltransferase-isomerase (342 aa).

It belongs to the QueA family. In terms of assembly, monomer.

Its subcellular location is the cytoplasm. The enzyme catalyses 7-aminomethyl-7-carbaguanosine(34) in tRNA + S-adenosyl-L-methionine = epoxyqueuosine(34) in tRNA + adenine + L-methionine + 2 H(+). Its pathway is tRNA modification; tRNA-queuosine biosynthesis. Functionally, transfers and isomerizes the ribose moiety from AdoMet to the 7-aminomethyl group of 7-deazaguanine (preQ1-tRNA) to give epoxyqueuosine (oQ-tRNA). The sequence is that of S-adenosylmethionine:tRNA ribosyltransferase-isomerase from Streptococcus pneumoniae serotype 4 (strain ATCC BAA-334 / TIGR4).